Consider the following 101-residue polypeptide: MAKKSSIEKNNRRKRLTKNAAPKRAKLKAIIADKSKPMEERFAATLKLSEMPRNSSATRIRNRCEITGRARSVYRKNKLSRIAIRDLGSRGLVPGLVKSSW.

The segment covering 1-10 has biased composition (basic and acidic residues); it reads MAKKSSIEKN. Residues 1–24 form a disordered region; the sequence is MAKKSSIEKNNRRKRLTKNAAPKR. Residues 11–24 are compositionally biased toward basic residues; it reads NRRKRLTKNAAPKR.

Belongs to the universal ribosomal protein uS14 family. In terms of assembly, part of the 30S ribosomal subunit. Contacts proteins S3 and S10.

Its function is as follows. Binds 16S rRNA, required for the assembly of 30S particles and may also be responsible for determining the conformation of the 16S rRNA at the A site. The polypeptide is Small ribosomal subunit protein uS14 (Rhodopseudomonas palustris (strain BisB18)).